We begin with the raw amino-acid sequence, 271 residues long: Inactive phospholipid phosphatase 7 (271 aa).

Residues 1 to 66 form a disordered region; it reads MPASQSRARA…RERRQSQQLP (66 aa). Over 1–112 the chain is Cytoplasmic; it reads MPASQSRARA…AASWASARSM (112 aa). Phosphoserine occurs at positions 43 and 62. The segment at 70–91 is interaction with MTOR; it reads CMQLNPSFKGIAFNSLLAIDIC. A helical transmembrane segment spans residues 113–133; the sequence is VKLIGITGHGIPWIGGTILCL. The Extracellular portion of the chain corresponds to 134 to 141; the sequence is VKSSTLAG. A helical membrane pass occupies residues 142 to 162; it reads QEVLMNLLLALLLDIMTVAGV. The Cytoplasmic segment spans residues 163–202; sequence QKLIKRRGPYETSPSLLDYLTMDIYAFPAGHASRAAMVSK. Residues 203–223 traverse the membrane as a helical segment; sequence FFLSHLVLAVPLRVLLVLWAL. Over 224-239 the chain is Extracellular; it reads CVGLSRVMIGRHHVTD. Residues 240-260 traverse the membrane as a helical segment; that stretch reads VLSGFVIGYLQFRLVELVWMP. The Cytoplasmic portion of the chain corresponds to 261-271; sequence SSTCQMLISAW.

Belongs to the PA-phosphatase related phosphoesterase family. In terms of assembly, homo and heterooligomer. Interacts with MTOR; controls MTOR-dependent IGF2 expression during myoblast differentiation.

It localises to the nucleus envelope. The protein resides in the endoplasmic reticulum membrane. Its subcellular location is the membrane. Its function is as follows. Plays a role as negative regulator of myoblast differentiation, in part through effects on MTOR signaling. Has no detectable enzymatic activity. This chain is Inactive phospholipid phosphatase 7, found in Homo sapiens (Human).